The chain runs to 128 residues: Cystatin-12 (128 aa).

The N-terminal stretch at 1 to 21 (MLWKSVLPVALIVLGIHDCSF) is a signal peptide. Intrachain disulfides connect Cys-82/Cys-92 and Cys-105/Cys-125. N-linked (GlcNAc...) asparagine glycosylation occurs at Asn-122.

This sequence belongs to the cystatin family.

The protein resides in the secreted. Functionally, may play a specialized role in spermatogenesis. The chain is Cystatin-12 (Cst12) from Rattus norvegicus (Rat).